A 434-amino-acid chain; its full sequence is 3-phosphoshikimate 1-carboxyvinyltransferase (434 aa).

The 3-phosphoshikimate site is built by K22, S23, and R27. K22 is a binding site for phosphoenolpyruvate. G94 and R122 together coordinate phosphoenolpyruvate. Positions 167, 169, 314, and 341 each coordinate 3-phosphoshikimate. Q169 provides a ligand contact to phosphoenolpyruvate. D314 (proton acceptor) is an active-site residue. Positions 345 and 391 each coordinate phosphoenolpyruvate.

Belongs to the EPSP synthase family. In terms of assembly, monomer.

The protein resides in the cytoplasm. The catalysed reaction is 3-phosphoshikimate + phosphoenolpyruvate = 5-O-(1-carboxyvinyl)-3-phosphoshikimate + phosphate. Its pathway is metabolic intermediate biosynthesis; chorismate biosynthesis; chorismate from D-erythrose 4-phosphate and phosphoenolpyruvate: step 6/7. Its function is as follows. Catalyzes the transfer of the enolpyruvyl moiety of phosphoenolpyruvate (PEP) to the 5-hydroxyl of shikimate-3-phosphate (S3P) to produce enolpyruvyl shikimate-3-phosphate and inorganic phosphate. In Leuconostoc mesenteroides subsp. mesenteroides (strain ATCC 8293 / DSM 20343 / BCRC 11652 / CCM 1803 / JCM 6124 / NCDO 523 / NBRC 100496 / NCIMB 8023 / NCTC 12954 / NRRL B-1118 / 37Y), this protein is 3-phosphoshikimate 1-carboxyvinyltransferase.